The chain runs to 548 residues: Glycosyl hydrolase family 109 protein 3 (548 aa).

An N-terminal signal peptide occupies residues 1–21 (MKLKKLLLSVLMLLSISGLQA). Residues 71–72 (MR), D93, 141–144 (WNHH), 161–162 (EV), and N190 each bind NAD(+). Y219 is a substrate binding site. 240–244 (DNLHW) serves as a coordination point for NAD(+). Substrate-binding positions include R245, 257 to 260 (YATH), and Y335. Position 257 (Y257) interacts with NAD(+).

Belongs to the Gfo/Idh/MocA family. Glycosyl hydrolase 109 subfamily. NAD(+) serves as cofactor.

In terms of biological role, glycosidase. In Phocaeicola vulgatus (strain ATCC 8482 / DSM 1447 / JCM 5826 / CCUG 4940 / NBRC 14291 / NCTC 11154) (Bacteroides vulgatus), this protein is Glycosyl hydrolase family 109 protein 3.